Reading from the N-terminus, the 56-residue chain is Ferredoxin (56 aa).

4Fe-4S ferredoxin-type domains follow at residues 2–29 (AYVI…AGDD) and 29–56 (DKYV…PQPE). [4Fe-4S] cluster-binding residues include cysteine 9, cysteine 12, cysteine 15, cysteine 19, cysteine 38, cysteine 41, cysteine 44, and cysteine 48.

[4Fe-4S] cluster is required as a cofactor.

Ferredoxins are iron-sulfur proteins that transfer electrons in a wide variety of metabolic reactions. The chain is Ferredoxin from Acetoanaerobium sticklandii (strain ATCC 12662 / DSM 519 / JCM 1433 / CCUG 9281 / NCIMB 10654 / HF) (Clostridium sticklandii).